A 295-amino-acid chain; its full sequence is uncharacterized protein (295 aa).

This is an uncharacterized protein from Methanocaldococcus jannaschii (strain ATCC 43067 / DSM 2661 / JAL-1 / JCM 10045 / NBRC 100440) (Methanococcus jannaschii).